A 60-amino-acid polypeptide reads, in one-letter code: Large ribosomal subunit protein bL32 (60 aa).

Residues 1 to 28 form a disordered region; that stretch reads MAVQQNKKSRSARDMRRSHDALEASTLS. Basic and acidic residues predominate over residues 11 to 22; it reads SARDMRRSHDAL.

The protein belongs to the bacterial ribosomal protein bL32 family.

The polypeptide is Large ribosomal subunit protein bL32 (Pseudomonas savastanoi pv. phaseolicola (strain 1448A / Race 6) (Pseudomonas syringae pv. phaseolicola (strain 1448A / Race 6))).